We begin with the raw amino-acid sequence, 473 residues long: Adenosylhomocysteinase (473 aa).

Residues Thr64, Asp139, and Glu199 each coordinate substrate. 200–202 is a binding site for NAD(+); sequence TTT. Substrate contacts are provided by Lys229 and Asp233. NAD(+) contacts are provided by residues Asn234, 263-268, Glu286, Asn321, 342-344, and Asn387; these read GYGDVG and IGH.

The protein belongs to the adenosylhomocysteinase family. Requires NAD(+) as cofactor.

The protein resides in the cytoplasm. It catalyses the reaction S-adenosyl-L-homocysteine + H2O = L-homocysteine + adenosine. Its pathway is amino-acid biosynthesis; L-homocysteine biosynthesis; L-homocysteine from S-adenosyl-L-homocysteine: step 1/1. May play a key role in the regulation of the intracellular concentration of adenosylhomocysteine. This is Adenosylhomocysteinase from Paraburkholderia phymatum (strain DSM 17167 / CIP 108236 / LMG 21445 / STM815) (Burkholderia phymatum).